The sequence spans 192 residues: Small ribosomal subunit protein uS4B (192 aa).

Phosphoserine occurs at positions 89 and 179. Residues 107-181 enclose the S4 RNA-binding domain; sequence RRLQTQVFKL…CKRKRLRSQQ (75 aa). The segment at 166–192 is disordered; the sequence is GGRPGRCKRKRLRSQQEGGEGEEAEEE.

The protein belongs to the universal ribosomal protein uS4 family. In terms of assembly, component of the small ribosomal subunit (SSU). Mature yeast ribosomes consist of a small (40S) and a large (60S) subunit. The 40S small subunit contains 1 molecule of ribosomal RNA (18S rRNA) and at least 33 different proteins. The large 60S subunit contains 3 rRNA molecules (25S, 5.8S and 5S rRNA) and at least 46 different proteins. Interacts with snoRNA U3. uS11 interacts with MPP10. Component of the ribosomal small subunit (SSU) processome composed of at least 40 protein subunits and snoRNA U3.

Its subcellular location is the cytoplasm. Its function is as follows. Component of the ribosome, a large ribonucleoprotein complex responsible for the synthesis of proteins in the cell. The small ribosomal subunit (SSU) binds messenger RNAs (mRNAs) and translates the encoded message by selecting cognate aminoacyl-transfer RNA (tRNA) molecules. The large subunit (LSU) contains the ribosomal catalytic site termed the peptidyl transferase center (PTC), which catalyzes the formation of peptide bonds, thereby polymerizing the amino acids delivered by tRNAs into a polypeptide chain. The nascent polypeptides leave the ribosome through a tunnel in the LSU and interact with protein factors that function in enzymatic processing, targeting, and the membrane insertion of nascent chains at the exit of the ribosomal tunnel. uS4 is involved in nucleolar processing of pre-18S ribosomal RNA and ribosome assembly. The protein is Small ribosomal subunit protein uS4B (rps902) of Schizosaccharomyces pombe (strain 972 / ATCC 24843) (Fission yeast).